The chain runs to 385 residues: Outer membrane porin protein BP0840 (385 aa).

The signal sequence occupies residues 1-20 (MKKTLLAAALLAGFAGAAQA).

It to bacterial outer membrane proteins and porins. Homotrimer.

The protein localises to the cell outer membrane. In terms of biological role, forms anion selective channels. This Bordetella pertussis (strain Tohama I / ATCC BAA-589 / NCTC 13251) protein is Outer membrane porin protein BP0840.